Reading from the N-terminus, the 57-residue chain is uncharacterized protein (57 aa).

A disordered region spans residues 1-57 (MANHRGGSGNFAEDRERASEAGKKGGQHSGGNFKNDPQRASEAGKKGGKSSHGKSDN). 2 stretches are compositionally biased toward basic and acidic residues: residues 12–23 (AEDRERASEAGK) and 36–45 (DPQRASEAGK). A compositionally biased stretch (basic residues) spans 46–57 (KGGKSSHGKSDN).

It belongs to the con-10 family.

This is an uncharacterized protein from Escherichia coli (strain K12).